The following is a 281-amino-acid chain: Aliphatic sulfonates import ATP-binding protein SsuB (281 aa).

The 224-residue stretch at 40–263 (LDIRGLRKSF…QRGSAELAAL (224 aa)) folds into the ABC transporter domain. 72 to 79 (GRSGCGKS) contacts ATP.

Belongs to the ABC transporter superfamily. Aliphatic sulfonates importer (TC 3.A.1.17.2) family. In terms of assembly, the complex is composed of two ATP-binding proteins (SsuB), two transmembrane proteins (SsuC) and a solute-binding protein (SsuA).

It is found in the cell inner membrane. It carries out the reaction ATP + H2O + aliphatic sulfonate-[sulfonate-binding protein]Side 1 = ADP + phosphate + aliphatic sulfonateSide 2 + [sulfonate-binding protein]Side 1.. Part of the ABC transporter complex SsuABC involved in aliphatic sulfonates import. Responsible for energy coupling to the transport system. In Rhodopseudomonas palustris (strain ATCC BAA-98 / CGA009), this protein is Aliphatic sulfonates import ATP-binding protein SsuB.